A 138-amino-acid chain; its full sequence is Single-stranded DNA-binding protein 3 (138 aa).

The 104-residue stretch at 1–104 (MINNIVLVGR…VVAENFQLLE (104 aa)) folds into the SSB domain. The segment covering 105-121 (SRNSQQQTNQSGNSSNS) has biased composition (low complexity). The segment at 105-138 (SRNSQQQTNQSGNSSNSYFGNANKMDISDDDLPF) is disordered. The Important for interaction with partner proteins motif lies at 133–138 (DDDLPF).

Homotetramer.

Functionally, plays an important role in DNA replication, recombination and repair. Binds to ssDNA and to an array of partner proteins to recruit them to their sites of action during DNA metabolism. The polypeptide is Single-stranded DNA-binding protein 3 (ssb3) (Streptococcus agalactiae serotype V (strain ATCC BAA-611 / 2603 V/R)).